The sequence spans 1272 residues: Regulator of nonsense transcripts 2 (1272 aa).

Basic and acidic residues predominate over residues 1-114; it reads MPAERKKPAS…QEEQAKRQQE (114 aa). 4 disordered regions span residues 1–126, 370–389, 423–445, and 490–517; these read MPAE…EKEE, DHRE…HSKG, NMPD…DIFT, and CQNK…SPDD. Positions 54–134 form a coiled coil; sequence EDKKKRLEDD…EESIQLHQEA (81 aa). A sufficient for interaction with UPF1 region spans residues 94–133; it reads KKKHQEEERKKQEEQAKRQQEEEAAAQMKEKEESIQLHQE. Residues 168–431 enclose the MIF4G 1 domain; that stretch reads LKKNTAFVKK…ENMPDLPQDK (264 aa). Composition is skewed to basic and acidic residues over residues 428 to 439 and 490 to 513; these read PQDKPTPEEHGP and CQNK…KEVS. A coiled-coil region spans residues 487 to 559; it reads EKSCQNKESN…EQEQEDEEAS (73 aa). MIF4G domains lie at 569-758 and 773-986; these read DAFL…CNPP and EYVR…LRPK. The interval 711 to 928 is sufficient for interaction with UPF3A and UPF3B; the sequence is GRFLFRSPES…IRLVCTILDT (218 aa). The tract at residues 757–1272 is sufficient for interaction with EIF4A1 and EIF1; the sequence is PPPAEKTVKK…LIFKTGGRRR (516 aa). Positions 839 to 859 are binds to UPF3B; sequence EDVGIHVVDGVLEDIRLGMEV. Residues 1018–1098 form a disordered region; that stretch reads DSKDSMTEGE…DEENTEVMIK (81 aa). The span at 1027 to 1076 shows a compositional bias: acidic residues; the sequence is ENLEEDEEEEEGGAETEEQSGNESEVNEPEEEEGSDNDDDEGEEEEEENT. Residues 1084–1272 form a sufficient for interaction with UPF1 C-terminus region; it reads KENETDEENT…LIFKTGGRRR (189 aa). Position 1088 is a phosphothreonine (threonine 1088). Interaction with UPF1 stretches follow at residues 1105–1129 and 1167–1207; these read VPCV…QQRS and DTMP…AEQE. The tract at residues 1105 to 1198 is necessary for interaction with UPF1; it reads VPCVEDEDFI…PMSSQLAANH (94 aa). A disordered region spans residues 1220 to 1272; the sequence is NERQEQEDYQEMLQSLAQRPAPANTNRERRPRYQHPKGAPNADLIFKTGGRRR.

Found in a post-splicing messenger ribonucleoprotein (mRNP) complex. Associates with the exon junction complex (EJC). Interacts with SMG1, EST1A, UPF1, UPF3A, UPF3B, EIF4A1 and EIF1. In terms of tissue distribution, ubiquitous.

It is found in the cytoplasm. The protein localises to the perinuclear region. Functionally, involved in nonsense-mediated decay (NMD) of mRNAs containing premature stop codons by associating with the nuclear exon junction complex (EJC). Recruited by UPF3B associated with the EJC core at the cytoplasmic side of the nuclear envelope and the subsequent formation of an UPF1-UPF2-UPF3 surveillance complex (including UPF1 bound to release factors at the stalled ribosome) is believed to activate NMD. In cooperation with UPF3B stimulates both ATPase and RNA helicase activities of UPF1. Binds spliced mRNA. The protein is Regulator of nonsense transcripts 2 of Homo sapiens (Human).